We begin with the raw amino-acid sequence, 365 residues long: uncharacterized protein (365 aa).

It belongs to the NAD(P)-dependent epimerase/dehydratase family.

The protein localises to the cytoplasm. It localises to the nucleus. This is an uncharacterized protein from Schizosaccharomyces pombe (strain 972 / ATCC 24843) (Fission yeast).